The following is a 202-amino-acid chain: Small ribosomal subunit protein uS4c (202 aa).

Residues 90–159 (MRLDNIIFRL…TKNYEFSQTY (70 aa)) form the S4 RNA-binding domain.

This sequence belongs to the universal ribosomal protein uS4 family. As to quaternary structure, part of the 30S ribosomal subunit. Contacts protein S5. The interaction surface between S4 and S5 is involved in control of translational fidelity.

The protein localises to the plastid. Its subcellular location is the chloroplast. Functionally, one of the primary rRNA binding proteins, it binds directly to 16S rRNA where it nucleates assembly of the body of the 30S subunit. In terms of biological role, with S5 and S12 plays an important role in translational accuracy. The protein is Small ribosomal subunit protein uS4c (rps4) of Huperzia lucidula (Shining clubmoss).